The sequence spans 478 residues: MXNFTPVNGSSANQSVRLVTAAHNHLETVEMVFIATVTGSLSLVTVVGNILVMLSIKVNRQLQTVNNYFLFSLGCADLIIGAFSMNLYTLYIIKGYWPLGAVVCDLWLALDYVVSNASVMNLLIISFDRYFCVTKPLTYPARRTTKMAGLMIAAAWVLSFVLWAPAILFWQFVVGKRTVPDNQCFIQFLSNPAVTFGTAIAAFYLPVVIMTVLYIHISLASRSRVHKHRPEGPKEKKAKTLAFLKSPLMKPSIKKPPPGGASREELRNGKLEEAPPPALPPPPRPVPDKDTSNESSSGSATQNTKERPPTELSTAEATTPALPAPTLQPRTLNPASKWSKIQIVTKQTGNECVTAIEIVPATPAGMRPAANVARKFASIARNQVRKKRQMAARERKVTRTIFAILLAFILTWTPYNVMVLVNTFCQSCIPERVWSIGYWLCYVNSTINPACYALCNATFKKTFRHLLLCQYRNIGTAR.

Residues Met1 to Glu30 are Extracellular-facing. N-linked (GlcNAc...) asparagine glycosylation is found at Asn8 and Asn13. The chain crosses the membrane as a helical span at residues Met31–Met53. At Leu54–Asn67 the chain is on the cytoplasmic side. A helical membrane pass occupies residues Tyr68–Tyr88. Residues Thr89–Asp105 lie on the Extracellular side of the membrane. An intrachain disulfide couples Cys104 to Cys184. The chain crosses the membrane as a helical span at residues Leu106–Phe127. At Asp128–Met147 the chain is on the cytoplasmic side. A helical transmembrane segment spans residues Ala148–Trp170. Residues Gln171 to Pro192 lie on the Extracellular side of the membrane. A helical transmembrane segment spans residues Ala193 to Ile215. The Cytoplasmic portion of the chain corresponds to His216 to Thr400. The segment at Leu271–Asn333 is disordered. A compositionally biased stretch (pro residues) spans Ala274–Pro285. The span at Asn293 to Asn303 shows a compositional bias: polar residues. Over residues Thr310–Leu332 the composition is skewed to low complexity. Residues Ile401 to Val421 form a helical membrane-spanning segment. Residues Asn422–Ser435 lie on the Extracellular side of the membrane. The chain crosses the membrane as a helical span at residues Ile436–Cys455. The Cytoplasmic portion of the chain corresponds to Asn456 to Arg478. 3 positions are modified to phosphothreonine: Thr458, Thr462, and Thr476.

It belongs to the G-protein coupled receptor 1 family. Muscarinic acetylcholine receptor subfamily. CHRM4 sub-subfamily.

The protein resides in the cell membrane. The protein localises to the postsynaptic cell membrane. In terms of biological role, the muscarinic acetylcholine receptor mediates various cellular responses, including inhibition of adenylate cyclase, breakdown of phosphoinositides and modulation of potassium channels through the action of G proteins. Primary transducing effect is inhibition of adenylate cyclase. The sequence is that of Muscarinic acetylcholine receptor M4 (Chrm4) from Rattus norvegicus (Rat).